We begin with the raw amino-acid sequence, 595 residues long: Protein alan shepard (595 aa).

Pro residues predominate over residues 1 to 12; that stretch reads MHPRYSPAPPPH. Positions 1–82 are disordered; that stretch reads MHPRYSPAPP…ASVAAAPPTP (82 aa). Position 5 is a phosphotyrosine (Tyr-5). Over residues 13–31 the composition is skewed to low complexity; that stretch reads QQQQQQQQQPMGGPHQQQS. The segment covering 32 to 43 has biased composition (gly residues); sequence AGGGPGHGGGAS. The segment covering 50–68 has biased composition (polar residues); the sequence is PNSQQLPPQMPRSQNYANG. Over residues 69 to 78 the composition is skewed to low complexity; it reads SSSAASVAAA. 2 positions are modified to phosphotyrosine: Tyr-138 and Tyr-154. Residues 184–238 are disordered; it reads RVPTAASPSNTNSSSSSNTGSQSGTLSTSLSNTTNTNTTMGPNGTAQNQNQQGGE. A compositionally biased stretch (low complexity) spans 190–238; it reads SPSNTNSSSSSNTGSQSGTLSTSLSNTTNTNTTMGPNGTAQNQNQQGGE. RRM domains follow at residues 243-316 and 322-401; these read TNLY…MAKQ and TNLY…FADG. The disordered stretch occupies residues 569 to 595; the sequence is MTDSEQASTAASPDEAYTQYPHQAAPK.

Functionally, has a role in the perception of gravity. This chain is Protein alan shepard, found in Drosophila virilis (Fruit fly).